We begin with the raw amino-acid sequence, 175 residues long: EKC/KEOPS complex subunit TPRKB (175 aa).

It belongs to the CGI121/TPRKB family. As to quaternary structure, component of the EKC/KEOPS complex.

The protein resides in the cytoplasm. It is found in the cytosol. It localises to the nucleus. Functionally, component of the EKC/KEOPS complex that is required for the formation of a threonylcarbamoyl group on adenosine at position 37 (t(6)A37) in tRNAs that read codons beginning with adenine. The complex is probably involved in the transfer of the threonylcarbamoyl moiety of threonylcarbamoyl-AMP (TC-AMP) to the N6 group of A37. Tprkb acts as an allosteric effector that regulates the t(6)A activity of the complex. This chain is EKC/KEOPS complex subunit TPRKB, found in Danio rerio (Zebrafish).